The chain runs to 355 residues: MWNKNRLTQMLSIEYPIIQAGMAGSTTPKLVASVSNSGGLGTIGAGYFNTQQLEDEIDYVRQLTSNSFGVNVFVPSQQSYTSSQIENMNAWLKPYRRALHLEEPVVKITEEQQFKCHIDTIIKKQVPVCCFTFGIPSEQIISRLKAANVKLIGTATSVDEAIANEKAGMDAIVAQGSEAGGHRGSFLKPKNQLPMVGTISLVPQIVDVVSIPVIAAGGIMDGRGVLASIVLGAEGVQMGTAFLTSQDSNASELLRDAIINSKETDTVITKAFSGKLARGINNRFIEEMSQYEGDIPDYPIQNELTSSIRKAAANIGDKELIHMWSGQSPRLATTHPANTIMSNIINQINQIMQYK.

FMN contacts are provided by residues Asn71, Gln175, Gly180, Gly218, and 237 to 240 (QMGT).

This sequence belongs to the nitronate monooxygenase family. NMO class I subfamily. Requires FMN as cofactor.

It catalyses the reaction 3 propionate 3-nitronate + 3 O2 + H2O = 3 3-oxopropanoate + 2 nitrate + nitrite + H2O2 + 3 H(+). Functionally, nitronate monooxygenase that uses molecular oxygen to catalyze the oxidative denitrification of alkyl nitronates. Acts on propionate 3-nitronate (P3N), the presumed physiological substrate. Probably functions in the detoxification of P3N, a metabolic poison produced by plants and fungi as a defense mechanism. The sequence is that of Probable nitronate monooxygenase from Staphylococcus aureus (strain USA300).